The chain runs to 153 residues: D-amino acid oxidase regulator (153 aa).

An involved in targeting to the mitochondrion region spans residues 1 to 25 (MLEKLMGADSLQLFRSRYTLGKIYF). Positions 138-153 (KDQSCNHKEITSTKAE) are interaction with DAO.

In terms of assembly, interacts with DAO (D-amino acid oxidase); the interaction is direct, can occur in the presence or absence of FAD or substrate bound to DAO, and results in a complex containing two DAO homodimers and two DAOA monomers. Interacts with DDO (D-aspartate oxidase); the interaction is direct. Interacts wih SOD1; the interaction is direct. Interacts with MSRB2; the interaction is direct. Expressed in the amygdala and in astrocytes of the cortex (at protein level). Expressed in the caudate nucleus, spinal cord and testis.

It localises to the cytoplasm. It is found in the cytosol. The protein resides in the golgi apparatus. The protein localises to the mitochondrion. Functionally, may suppress DAO (D-amino acid oxidase) and SOD1 activity and promote their degradation. Has conversely also been suggested to function as a DAO activator. May stimulate the degradation of DDO (D-aspartate oxidase). May play a role in mitochondrial fission. This is D-amino acid oxidase regulator (DAOA) from Homo sapiens (Human).